The following is a 533-amino-acid chain: tRNA(Ile)-lysidine synthase (533 aa).

Residue 27 to 32 (SGGSDS) participates in ATP binding.

Belongs to the tRNA(Ile)-lysidine synthase family.

It is found in the cytoplasm. It catalyses the reaction cytidine(34) in tRNA(Ile2) + L-lysine + ATP = lysidine(34) in tRNA(Ile2) + AMP + diphosphate + H(+). Its function is as follows. Ligates lysine onto the cytidine present at position 34 of the AUA codon-specific tRNA(Ile) that contains the anticodon CAU, in an ATP-dependent manner. Cytidine is converted to lysidine, thus changing the amino acid specificity of the tRNA from methionine to isoleucine. The chain is tRNA(Ile)-lysidine synthase from Rickettsia peacockii (strain Rustic).